We begin with the raw amino-acid sequence, 754 residues long: Disintegrin and metalloproteinase domain-containing protein 7 (754 aa).

A signal peptide spans 1 to 18 (MLPGCIFLMILLIPQVKE). Positions 19–176 (KFILGVEGQQ…NYSCTELNFT (158 aa)) are excised as a propeptide. Residues 19 to 668 (KFILGVEGQQ…ACEETLHVTN (650 aa)) are Extracellular-facing. 4 N-linked (GlcNAc...) asparagine glycosylation sites follow: Asn84, Asn167, Asn174, and Asn184. One can recognise a Peptidase M12B domain in the interval 199–394 (KYVELFIVAD…YKPTCMLNIP (196 aa)). 4 disulfide bridges follow: Cys310–Cys389, Cys350–Cys373, Cys352–Cys357, and Cys460–Cys480. Residues 402–488 (FQFCGNKKLD…ACPKDQFRVN (87 aa)) form the Disintegrin domain. 2 N-linked (GlcNAc...) asparagine glycosylation sites follow: Asn584 and Asn668. A helical membrane pass occupies residues 669–689 (ITILVVVLVLVIVGIGVLILL). Residues 690–754 (VRYRKCIKLK…GIADPNQSAK (65 aa)) are Cytoplasmic-facing.

In terms of assembly, interacts with ITM2B in sperm; the interaction increases following capacitation. Interacts with HSPA5 and CANX.

It localises to the membrane. Its function is as follows. Required for normal male fertility via maintenance of epithelial cell morphology in the caput epididymis and subsequently correct epididymis lumen structure required for sperm development. Plays a role in sperm motility, flagella morphology and tyrosine phosphorylation during sperm capacitance. Plays a role in normal expression levels of HSPA5, ITM2B and ADAM2 in sperm both prior to and post-capacitation. This is a non catalytic metalloprotease-like protein. This is Disintegrin and metalloproteinase domain-containing protein 7 from Homo sapiens (Human).